The following is a 531-amino-acid chain: Na(+)/H(+) antiporter NhaB (531 aa).

12 helical membrane passes run 13 to 33 (FLGK…IINP), 34 to 54 (LVFF…EFIF), 90 to 110 (LVAN…IYFM), 121 to 141 (ILIG…TAAF), 145 to 165 (FLDA…FYAI), 206 to 226 (LLMH…VGEP), 242 to 262 (FIIR…LTCV), 308 to 328 (VIAV…GLIG), 352 to 372 (EEAL…AVII), 394 to 414 (LALF…VFVG), 456 to 476 (GQAA…QLSY), and 482 to 502 (MALP…SFLL).

This sequence belongs to the NhaB Na(+)/H(+) (TC 2.A.34) antiporter family.

Its subcellular location is the cell inner membrane. It catalyses the reaction 2 Na(+)(in) + 3 H(+)(out) = 2 Na(+)(out) + 3 H(+)(in). In terms of biological role, na(+)/H(+) antiporter that extrudes sodium in exchange for external protons. In Aliivibrio salmonicida (strain LFI1238) (Vibrio salmonicida (strain LFI1238)), this protein is Na(+)/H(+) antiporter NhaB.